The chain runs to 346 residues: NADH-ubiquinone oxidoreductase chain 2 (346 aa).

A run of 10 helical transmembrane segments spans residues 25–45 (HWIL…PLIS), 52–72 (AIEA…LILF), 95–115 (CLIL…HFWF), 124–144 (LITA…LLLM), 149–169 (LNPA…GWMG), 178–196 (ILAF…IIIY), 200–219 (LTIL…FLSL), 247–267 (TLLS…WLII), 274–294 (EMTP…FFYL), and 326–346 (AILT…TTLV).

The protein belongs to the complex I subunit 2 family.

It localises to the mitochondrion inner membrane. The enzyme catalyses a ubiquinone + NADH + 5 H(+)(in) = a ubiquinol + NAD(+) + 4 H(+)(out). Its function is as follows. Core subunit of the mitochondrial membrane respiratory chain NADH dehydrogenase (Complex I) that is believed to belong to the minimal assembly required for catalysis. Complex I functions in the transfer of electrons from NADH to the respiratory chain. The immediate electron acceptor for the enzyme is believed to be ubiquinone. The protein is NADH-ubiquinone oxidoreductase chain 2 (MT-ND2) of Coturnix japonica (Japanese quail).